The sequence spans 1182 residues: uncharacterized protein (1182 aa).

The helical transmembrane segment at 618 to 638 threads the bilayer; that stretch reads GSSSLVCSVMVVIFSIILYYL.

The protein resides in the host membrane. This is an uncharacterized protein from Callospermophilus lateralis (Golden-mantled ground squirrel).